Reading from the N-terminus, the 364-residue chain is Methylthioribose-1-phosphate isomerase (364 aa).

The active-site Proton donor is the aspartate 246.

It belongs to the eIF-2B alpha/beta/delta subunits family. MtnA subfamily.

It localises to the cytoplasm. The protein resides in the nucleus. The enzyme catalyses 5-(methylsulfanyl)-alpha-D-ribose 1-phosphate = 5-(methylsulfanyl)-D-ribulose 1-phosphate. It functions in the pathway amino-acid biosynthesis; L-methionine biosynthesis via salvage pathway; L-methionine from S-methyl-5-thio-alpha-D-ribose 1-phosphate: step 1/6. Catalyzes the interconversion of methylthioribose-1-phosphate (MTR-1-P) into methylthioribulose-1-phosphate (MTRu-1-P). The chain is Methylthioribose-1-phosphate isomerase from Bombyx mori (Silk moth).